Here is a 149-residue protein sequence, read N- to C-terminus: Transcriptional repressor NrdR (149 aa).

A zinc finger spans residues 3–34 (CPFCATDDTKVVDSRLTADGYQIRRRRECPVC). The ATP-cone domain occupies 49–139 (PHIVKNNGSR…VYLSFDDVEE (91 aa)).

It belongs to the NrdR family. Zn(2+) serves as cofactor.

Its function is as follows. Negatively regulates transcription of bacterial ribonucleotide reductase nrd genes and operons by binding to NrdR-boxes. This chain is Transcriptional repressor NrdR, found in Glaesserella parasuis serovar 5 (strain SH0165) (Haemophilus parasuis).